Reading from the N-terminus, the 360-residue chain is Inhibin alpha chain (360 aa).

Residues 1–17 form the signal peptide; sequence MWLQLLLLLLAPQGGHG. A propeptide spanning residues 18–60 is cleaved from the precursor; that stretch reads CHGLELDRELVLAKVRALFLDALGPPPVTGEGGDPGVRRLHRR. The propeptide at 61-226 is inhibin alpha N-terminal region; sequence HAVGGFMRRG…PPSGGERARR (166 aa). Residues asparagine 140 and asparagine 262 are each glycosylated (N-linked (GlcNAc...) asparagine). 3 disulfides stabilise this stretch: cysteine 256–cysteine 322, cysteine 285–cysteine 357, and cysteine 289–cysteine 359.

Belongs to the TGF-beta family. In terms of assembly, dimeric, linked by one or more disulfide bonds. Activin B is a dimer of alpha and beta-B. Inhibin A is a dimer of alpha and beta-A. Inhibin B is a dimer of alpha and beta-B. Interacts with TGFBR3L; this interaction regulates female fertility. In terms of processing, proteolytic processing yields a number of bioactive forms, consisting either solely of the mature alpha chain, of the most N-terminal propeptide linked through a disulfide bond to the mature alpha chain, or of the entire proprotein.

Its subcellular location is the secreted. In terms of biological role, inhibins and activins inhibit and activate, respectively, the secretion of follitropin by the pituitary gland. Inhibins/activins are involved in regulating a number of diverse functions such as hypothalamic and pituitary hormone secretion, gonadal hormone secretion, germ cell development and maturation, erythroid differentiation, insulin secretion, nerve cell survival, embryonic axial development or bone growth, depending on their subunit composition. Inhibins appear to oppose the functions of activins. Inhibin A is a dimer of alpha/INHA and beta-A/INHBA that functions as a feedback regulator in the hypothalamic-pituitary-gonadal (HPG) axis. Inhibits the secretion of FSH from the anterior pituitary gland by acting on pituitary gonadotrope cells. Antagonizes activin A by binding to the proteoglycan, betaglycan, and forming a stable complex with and, thereby, sequestering type II activin receptors while excluding type I receptor. Its function is as follows. Inhibin B is a dimer of alpha and beta-B that plays a crucial role in the regulation of the reproductive system by inhibiting the secretion of follicle-stimulating hormone (FSH) from the anterior pituitary gland. Thereby, maintains reproductive homeostasis in both males and females. Acts as a more potent suppressor of FSH release than inhibin A. Functions as competitive receptor antagonist binding activin type II receptors with high affinity in the presence of the TGF-beta type III coreceptor/TGFBR3L. In Bos taurus (Bovine), this protein is Inhibin alpha chain (INHA).